The sequence spans 507 residues: Probable cyclic di-GMP phosphodiesterase PdeG (507 aa).

Transmembrane regions (helical) follow at residues 4 to 24 and 217 to 237; these read TLIP…ILNI and LIDK…AAAF. Residues 246–500 enclose the EAL domain; sequence SATPEEILRR…DLVKIILSKP (255 aa).

Its subcellular location is the cell membrane. It carries out the reaction 3',3'-c-di-GMP + H2O = 5'-phosphoguanylyl(3'-&gt;5')guanosine + H(+). In terms of biological role, phosphodiesterase (PDE) that catalyzes the hydrolysis of cyclic-di-GMP (c-di-GMP) to 5'-pGpG. The sequence is that of Probable cyclic di-GMP phosphodiesterase PdeG from Escherichia coli (strain K12).